The chain runs to 325 residues: tRNA-dihydrouridine(16) synthase (325 aa).

FMN-binding positions include 12-14 (PMQ) and Gln-73. The active-site Proton donor is the Cys-103. FMN-binding positions include Lys-144, 205-207 (NGE), and 229-230 (GR).

It belongs to the Dus family. DusC subfamily. It depends on FMN as a cofactor.

The catalysed reaction is 5,6-dihydrouridine(16) in tRNA + NADP(+) = uridine(16) in tRNA + NADPH + H(+). It carries out the reaction 5,6-dihydrouridine(16) in tRNA + NAD(+) = uridine(16) in tRNA + NADH + H(+). In terms of biological role, catalyzes the synthesis of 5,6-dihydrouridine (D), a modified base found in the D-loop of most tRNAs, via the reduction of the C5-C6 double bond in target uridines. Specifically modifies U16 in tRNAs. The chain is tRNA-dihydrouridine(16) synthase from Haemophilus ducreyi (strain 35000HP / ATCC 700724).